A 457-amino-acid chain; its full sequence is Siroheme synthase (457 aa).

The precorrin-2 dehydrogenase /sirohydrochlorin ferrochelatase stretch occupies residues 1-204; the sequence is MDHLPIFCQL…NDQKAITETT (204 aa). Residues 22–23 and 43–44 each bind NAD(+); these read DV and LA. Ser128 carries the phosphoserine modification. Positions 216–457 are uroporphyrinogen-III C-methyltransferase; it reads GEVVLVGAGP…RDKLNWFSNH (242 aa). Pro225 is a binding site for S-adenosyl-L-methionine. The Proton acceptor role is filled by Asp248. The Proton donor role is filled by Lys270. S-adenosyl-L-methionine contacts are provided by residues 301 to 303, Ile306, 331 to 332, Met382, and Gly411; these read GGD and TA.

It in the N-terminal section; belongs to the precorrin-2 dehydrogenase / sirohydrochlorin ferrochelatase family. In the C-terminal section; belongs to the precorrin methyltransferase family.

It catalyses the reaction uroporphyrinogen III + 2 S-adenosyl-L-methionine = precorrin-2 + 2 S-adenosyl-L-homocysteine + H(+). The catalysed reaction is precorrin-2 + NAD(+) = sirohydrochlorin + NADH + 2 H(+). It carries out the reaction siroheme + 2 H(+) = sirohydrochlorin + Fe(2+). The protein operates within cofactor biosynthesis; adenosylcobalamin biosynthesis; precorrin-2 from uroporphyrinogen III: step 1/1. It functions in the pathway cofactor biosynthesis; adenosylcobalamin biosynthesis; sirohydrochlorin from precorrin-2: step 1/1. It participates in porphyrin-containing compound metabolism; siroheme biosynthesis; precorrin-2 from uroporphyrinogen III: step 1/1. Its pathway is porphyrin-containing compound metabolism; siroheme biosynthesis; siroheme from sirohydrochlorin: step 1/1. The protein operates within porphyrin-containing compound metabolism; siroheme biosynthesis; sirohydrochlorin from precorrin-2: step 1/1. Multifunctional enzyme that catalyzes the SAM-dependent methylations of uroporphyrinogen III at position C-2 and C-7 to form precorrin-2 via precorrin-1. Then it catalyzes the NAD-dependent ring dehydrogenation of precorrin-2 to yield sirohydrochlorin. Finally, it catalyzes the ferrochelation of sirohydrochlorin to yield siroheme. The sequence is that of Siroheme synthase from Escherichia coli O6:H1 (strain CFT073 / ATCC 700928 / UPEC).